Here is a 588-residue protein sequence, read N- to C-terminus: Intracellular maltogenic amylase (588 aa).

Positions 149, 155, 174, and 176 each coordinate Ca(2+). His-249 and Arg-325 together coordinate substrate. Asp-327 acts as the Nucleophile in catalysis. The Proton donor role is filled by Glu-356. Substrate is bound by residues 422–423 (HD), Asp-467, and Arg-471.

The protein belongs to the glycosyl hydrolase 13 family. BbmA subfamily. In terms of assembly, monomer or homodimer; in equilibrium. Ca(2+) is required as a cofactor.

It localises to the cytoplasm. Hydrolyzes beta-cyclodextrin to maltose and glucose, soluble starch to maltose and glucose, and pullulan to panose with trace amounts of maltose and glucose. It is also able to hydrolyze acarbose. Can also exhibit a transglycosylation activity transferring glucose or maltose to another moiety of sugars by forming alpha-(1,6)- and alpha-(1,3)-glycosidic linkages upon the hydrolysis of substrate at concentrations of 5% or higher. This chain is Intracellular maltogenic amylase (bbmA), found in Bacillus subtilis (strain 168).